A 198-amino-acid chain; its full sequence is MEFYPIAIEKLIEEFAKLPGIGKKTAQRLTLYVLNLPREEVEEFANALIKARGTIKYCSVCGNFTDKDPCAICSNPNRDKNTICVVEHPKDIMTMEKVREYNGMYHVLHGTISPMAGRGPNDIKLKELISRINGEIKEVIVATNPNVEGEATAMYISKILKPLGAKVTRIAHGIPVGGDLEYADEVTLAKALEGRKEI.

The C4-type zinc finger occupies 58–73 (CSVCGNFTDKDPCAIC). The 95-residue stretch at 81–175 (NTICVVEHPK…KVTRIAHGIP (95 aa)) folds into the Toprim domain.

This sequence belongs to the RecR family.

May play a role in DNA repair. It seems to be involved in an RecBC-independent recombinational process of DNA repair. It may act with RecF and RecO. This is Recombination protein RecR from Clostridium tetani (strain Massachusetts / E88).